Consider the following 354-residue polypeptide: Selenide, water dikinase (354 aa).

Cys23 is an active-site residue. ATP is bound by residues Lys26 and Thr54–Asp56. Asp57 is a binding site for Mg(2+). Residues Asp74, Asp97, and Gly145–Ser147 each bind ATP. A Mg(2+)-binding site is contributed by Asp97. Position 233 (Asp233) interacts with Mg(2+).

Belongs to the selenophosphate synthase 1 family. Class I subfamily. In terms of assembly, homodimer. The cofactor is Mg(2+).

It carries out the reaction hydrogenselenide + ATP + H2O = selenophosphate + AMP + phosphate + 2 H(+). Its function is as follows. Synthesizes selenophosphate from selenide and ATP. The protein is Selenide, water dikinase of Burkholderia orbicola (strain MC0-3).